A 245-amino-acid chain; its full sequence is 1-(5-phosphoribosyl)-5-[(5-phosphoribosylamino)methylideneamino] imidazole-4-carboxamide isomerase (245 aa).

Aspartate 7 serves as the catalytic Proton acceptor. Aspartate 129 serves as the catalytic Proton donor.

It belongs to the HisA/HisF family.

The protein resides in the cytoplasm. It carries out the reaction 1-(5-phospho-beta-D-ribosyl)-5-[(5-phospho-beta-D-ribosylamino)methylideneamino]imidazole-4-carboxamide = 5-[(5-phospho-1-deoxy-D-ribulos-1-ylimino)methylamino]-1-(5-phospho-beta-D-ribosyl)imidazole-4-carboxamide. The protein operates within amino-acid biosynthesis; L-histidine biosynthesis; L-histidine from 5-phospho-alpha-D-ribose 1-diphosphate: step 4/9. This is 1-(5-phosphoribosyl)-5-[(5-phosphoribosylamino)methylideneamino] imidazole-4-carboxamide isomerase from Shewanella baltica (strain OS155 / ATCC BAA-1091).